We begin with the raw amino-acid sequence, 206 residues long: CASP-like protein 4B2 (206 aa).

2 stretches are compositionally biased toward low complexity: residues 1–12 (MAMVPADADAAA) and 24–36 (SSQN…AAAA). Positions 1–42 (MAMVPADADAAAKPPPDVEKPDYSSQNGAPNSAAAAAGGGGG) are disordered. At 1–60 (MAMVPADADAAAKPPPDVEKPDYSSQNGAPNSAAAAAGGGGGGVVDSVVARWRREDMLDK) the chain is on the cytoplasmic side. Residues 61–81 (SPLALHAAAAAFAFVALVLVA) form a helical membrane-spanning segment. Topologically, residues 82 to 99 (SNQHGDWMEFDRYQEYRY) are extracellular. A helical transmembrane segment spans residues 100–120 (LLAIAALAFAYSLAQALRHAL). Topologically, residues 121–138 (RMRRGVDPVPTASGRLLD) are cytoplasmic. A helical membrane pass occupies residues 139-159 (FASDQVVAYLLMSALSAATPI). The Extracellular portion of the chain corresponds to 160 to 174 (TNRMRSAVINRFTDT). A helical membrane pass occupies residues 175 to 195 (TAAAISMAFLAFVSLALSAIV). Topologically, residues 196–206 (SGYKLSKQTYM) are cytoplasmic.

This sequence belongs to the Casparian strip membrane proteins (CASP) family. Homodimer and heterodimers.

Its subcellular location is the cell membrane. The polypeptide is CASP-like protein 4B2 (Oryza sativa subsp. japonica (Rice)).